The following is a 536-amino-acid chain: Quinate permease (536 aa).

The Cytoplasmic portion of the chain corresponds to 1–26 (MTLLALKEDRPTPKAVYNWRVYTCAA). The helical transmembrane segment at 27-47 (IASFASCMIGYDSSFIGTTLA) threads the bilayer. At 48 to 74 (LPSFTKEFDFASYTPGALALLQSNIVS) the chain is on the extracellular side. The helical transmembrane segment at 75–95 (VYQAGAFFGSLFAFATSYFLG) threads the bilayer. Residues 96–98 (RRR) lie on the Cytoplasmic side of the membrane. A helical transmembrane segment spans residues 99–119 (SLIAFSVVFIIGAAIMLAADG). At 120–131 (QRRGVDPIIAGR) the chain is on the extracellular side. A helical transmembrane segment spans residues 132–152 (VLAGIGVGGASNMVPIYISEL). Topologically, residues 153–160 (APPAVRGR) are cytoplasmic. Residues 161 to 181 (LVGIYELGWQIGGLVGFWINY) traverse the membrane as a helical segment. The Extracellular segment spans residues 182-195 (GVNTTMAPTRSQWL). N-linked (GlcNAc...) asparagine glycosylation occurs at N184. Residues 196 to 216 (IPFAVQLIPAGLLFLGSFWIP) form a helical membrane-spanning segment. The Cytoplasmic portion of the chain corresponds to 217–285 (ESPRWLFANG…SLKQPKVRWR (69 aa)). A helical membrane pass occupies residues 286–306 (FFLGGMLFLWQNGSGINAINY). Residues 307 to 327 (YSPTVFRSIGITGTNTGFLTT) are Extracellular-facing. A helical membrane pass occupies residues 328–349 (GIFGVVKMVLTIIWLLWLVDLV). At 350–352 (GRR) the chain is on the cytoplasmic side. The chain crosses the membrane as a helical span at residues 353–373 (RILFVGATGGSLCMWFIGAYI). Residues 374–389 (KIAGPGTTKTEEAKLT) lie on the Extracellular side of the membrane. Residues 390 to 410 (SGGIAAIFFFYLWTAFYTPSW) form a helical membrane-spanning segment. The Cytoplasmic portion of the chain corresponds to 411–435 (NGTPWVINSEMFDQNTRSLGQASAA). The chain crosses the membrane as a helical span at residues 436-456 (ANNWFWNFIISRFTPQMFIKM). The Extracellular segment spans residues 457–458 (EY). The helical transmembrane segment at 459-479 (GVYFFFASLMLLSVVFIYFFI) threads the bilayer. Topologically, residues 480–536 (PETKSIPLEAMDRLFAIKSVHNANKILMDELNFDRNPEREQSSLDEKDRVTQTENAV) are cytoplasmic. Positions 516 to 530 (PEREQSSLDEKDRVT) are enriched in basic and acidic residues. The tract at residues 516-536 (PEREQSSLDEKDRVTQTENAV) is disordered.

Belongs to the major facilitator superfamily. Sugar transporter (TC 2.A.1.1) family.

The protein resides in the membrane. The protein is Quinate permease (qa-y) of Neurospora africana.